A 335-amino-acid polypeptide reads, in one-letter code: Glucokinase (335 aa).

11-16 (ADIGGT) contributes to the ATP binding site.

This sequence belongs to the bacterial glucokinase family.

The protein localises to the cytoplasm. It catalyses the reaction D-glucose + ATP = D-glucose 6-phosphate + ADP + H(+). This Xanthomonas oryzae pv. oryzae (strain MAFF 311018) protein is Glucokinase.